A 580-amino-acid chain; its full sequence is MAQEVSEYLSQNPRVAAWVEALRCDGETDKHWRHRRDFLLRNAGDLAPAGGAASASTDEAADAESGTRNRQLQQLISFSMAWANHVFLGCRYPQKVMDKILSMAEGIKVTDAPTYTTRDELVAKVKKRGISSSNEGVEEPSKKRVIEGKNSSAVEQDHAKTSAKTERASAQQENSSTCIGSAIKSESGNSARSSGISSQNSSTSDGDRSVSSQSSSSVSSQVTTAGSGKASEAEAPDKHGSASFVSLLKSSVNSHMTQSTDSRQQSGSPKKSALEGSSASASQSSSEIEVPLLGSSGSSEVELPLLSSKPSSETASSGLTSKTSSEASVSSSVAKNSSSSGTSLLTPKSSSSTNTSLLTSKSTSQVAASLLASKSSSQTSGSLVSKSTSLASVSQLASKSSSQTSTSQLPSKSTSQSSESSVKFSCKLTNEDVKQKQPFFNRLYKTVAWKLVAVGGFSPNVNHGELLNAAIEALKATLDVFFVPLKELADLPQNKSSQESIVCELRCKSVYLGTGCGKSKENAKAVASREALKLFLKKKVVVKICKRKYRGSEIEDLVLLDEESRPVNLPPALKHPQELL.

At A2 the chain carries N-acetylalanine. In terms of domain architecture, XRN2-binding (XTBD) spans V19–S133. The tract at residues G129–S356 is disordered. S131 is subject to Phosphoserine. Over residues E155–R167 the composition is skewed to basic and acidic residues. Residues A168–I179 show a composition bias toward polar residues. A Glycyl lysine isopeptide (Lys-Gly) (interchain with G-Cter in SUMO1) cross-link involves residue K184. Over residues S185–G228 the composition is skewed to low complexity. Residues S231 to G240 show a composition bias toward basic and acidic residues. S241 is subject to Phosphoserine. Polar residues predominate over residues L248 to P269. Composition is skewed to low complexity over residues L274–E313 and S321–S356. T346 carries the post-translational modification Phosphothreonine. The residue at position 389 (S389) is a Phosphoserine. A DRBM domain is found at N462 to K537.

Belongs to the CARF family. Interacts with CDKN2A/p14ARF, p53/TP53 and MDM2. Interacts with CHEK2 and MAPK3. Interacts with XRN2. Post-translationally, may be ubiquitinated. Ubiquitously expressed.

The protein localises to the nucleus. It is found in the nucleoplasm. In terms of biological role, regulates DNA damage response in a dose-dependent manner through a number of signaling pathways involved in cell proliferation, apoptosis and senescence. The polypeptide is CDKN2A-interacting protein (CDKN2AIP) (Homo sapiens (Human)).